Here is a 184-residue protein sequence, read N- to C-terminus: UPF0301 protein SPO0296 (184 aa).

This sequence belongs to the UPF0301 (AlgH) family.

This Ruegeria pomeroyi (strain ATCC 700808 / DSM 15171 / DSS-3) (Silicibacter pomeroyi) protein is UPF0301 protein SPO0296.